Here is a 379-residue protein sequence, read N- to C-terminus: MTDNRKPEDYTIEMDKLGQNKNYQAPPPPPQPRSSTASSISNNAALSVLAYCGSSILMTVMNKYVLSSDFNLNFFLLCVQSLVCIIAIQLCKACGLITYRDFNLDEARKWFPITLLLIGMIYTGSKALQFLSIPVYTIFKNLTIILIAYGEVLWFGGSVTNLTLFSFGLMVFSSIIAAWADIKHAIESSGDATSKVSTLNAGYIWMLINCLCTSSYVLGMRKRIKLTNFKDFDTMFYNNLLSIPVLIVCSGILEDWSPANVARNFPSADRNGIMFAMILSGLSTVFISYTSAWCVRVTSSTTYSMVGALNKLPIALSGLIFFDAPVTFPSVSAIMVGFVSGIVYAVAKIKQNAKPKVGILPTTNPVSASSQSMRDSLRS.

The Cytoplasmic segment spans residues methionine 1–serine 39. Positions leucine 17–serine 38 are disordered. Residues isoleucine 40–valine 60 traverse the membrane as a helical segment. The Lumenal portion of the chain corresponds to methionine 61–aspartate 69. The chain crosses the membrane as a helical span at residues phenylalanine 70 to leucine 90. The Cytoplasmic segment spans residues cysteine 91 to tryptophan 110. Residues phenylalanine 111–isoleucine 133 form a helical membrane-spanning segment. Residues proline 134 to tyrosine 136 are Lumenal-facing. Residues threonine 137–glycine 156 form a helical membrane-spanning segment. Topologically, residues glycine 157–leucine 162 are cytoplasmic. The helical transmembrane segment at threonine 163 to isoleucine 182 threads the bilayer. At lysine 183–threonine 198 the chain is on the lumenal side. The helical transmembrane segment at leucine 199–glycine 219 threads the bilayer. The Cytoplasmic segment spans residues methionine 220–aspartate 233. The helical transmembrane segment at threonine 234–glutamate 254 threads the bilayer. At aspartate 255–glycine 272 the chain is on the lumenal side. Residues isoleucine 273 to tryptophan 293 traverse the membrane as a helical segment. Residues cysteine 294–threonine 301 are Cytoplasmic-facing. A helical transmembrane segment spans residues threonine 302–phenylalanine 322. Residues aspartate 323–proline 325 lie on the Lumenal side of the membrane. Residues valine 326–valine 346 traverse the membrane as a helical segment. At alanine 347–serine 379 the chain is on the cytoplasmic side.

This sequence belongs to the TPT transporter family. SLC35D subfamily. Homooligomer.

The protein resides in the golgi apparatus membrane. The protein localises to the cytoplasmic vesicle membrane. It localises to the endoplasmic reticulum membrane. In terms of biological role, involved in the import of GDP-mannose from the cytoplasm into the Golgi lumen. In Emericella nidulans (strain FGSC A4 / ATCC 38163 / CBS 112.46 / NRRL 194 / M139) (Aspergillus nidulans), this protein is GDP-mannose transporter 1 (gmt1).